We begin with the raw amino-acid sequence, 122 residues long: Small ribosomal subunit protein uS12 (122 aa).

Asp-89 carries the 3-methylthioaspartic acid modification.

Belongs to the universal ribosomal protein uS12 family. In terms of assembly, part of the 30S ribosomal subunit. Contacts proteins S8 and S17. May interact with IF1 in the 30S initiation complex.

Functionally, with S4 and S5 plays an important role in translational accuracy. Interacts with and stabilizes bases of the 16S rRNA that are involved in tRNA selection in the A site and with the mRNA backbone. Located at the interface of the 30S and 50S subunits, it traverses the body of the 30S subunit contacting proteins on the other side and probably holding the rRNA structure together. The combined cluster of proteins S8, S12 and S17 appears to hold together the shoulder and platform of the 30S subunit. This Neorickettsia sennetsu (strain ATCC VR-367 / Miyayama) (Ehrlichia sennetsu) protein is Small ribosomal subunit protein uS12.